Here is a 169-residue protein sequence, read N- to C-terminus: S-ribosylhomocysteine lyase (169 aa).

Fe cation contacts are provided by His-54, His-58, and Cys-128.

The protein belongs to the LuxS family. In terms of assembly, homodimer. It depends on Fe cation as a cofactor.

It catalyses the reaction S-(5-deoxy-D-ribos-5-yl)-L-homocysteine = (S)-4,5-dihydroxypentane-2,3-dione + L-homocysteine. In terms of biological role, involved in the synthesis of autoinducer 2 (AI-2) which is secreted by bacteria and is used to communicate both the cell density and the metabolic potential of the environment. The regulation of gene expression in response to changes in cell density is called quorum sensing. Catalyzes the transformation of S-ribosylhomocysteine (RHC) to homocysteine (HC) and 4,5-dihydroxy-2,3-pentadione (DPD). This chain is S-ribosylhomocysteine lyase, found in Shewanella sp. (strain MR-7).